The primary structure comprises 506 residues: 2-isopropylmalate synthase (506 aa).

Residues 8-272 (LIVFDTTLRD…ETGIQLKEIL (265 aa)) enclose the Pyruvate carboxyltransferase domain. Residues Asp-17, His-206, His-208, and Asn-242 each contribute to the Mn(2+) site. The regulatory domain stretch occupies residues 396-506 (ELEYVAVTVC…YLNAVNKALL (111 aa)).

The protein belongs to the alpha-IPM synthase/homocitrate synthase family. LeuA type 1 subfamily. Homodimer. It depends on Mn(2+) as a cofactor.

The protein resides in the cytoplasm. It carries out the reaction 3-methyl-2-oxobutanoate + acetyl-CoA + H2O = (2S)-2-isopropylmalate + CoA + H(+). It participates in amino-acid biosynthesis; L-leucine biosynthesis; L-leucine from 3-methyl-2-oxobutanoate: step 1/4. Catalyzes the condensation of the acetyl group of acetyl-CoA with 3-methyl-2-oxobutanoate (2-ketoisovalerate) to form 3-carboxy-3-hydroxy-4-methylpentanoate (2-isopropylmalate). The polypeptide is 2-isopropylmalate synthase (Methylacidiphilum infernorum (isolate V4) (Methylokorus infernorum (strain V4))).